A 677-amino-acid polypeptide reads, in one-letter code: Multicopper oxidase GIP1 (677 aa).

A signal peptide spans 1–23 (MLTSPRLILLLLAWVFSALVASA). 2 consecutive Plastocyanin-like domains span residues 31-150 (ITWE…IRRK) and 179-379 (LVMV…RYKG). Asparagine 76 carries N-linked (GlcNAc...) asparagine glycosylation. 4 residues coordinate Cu cation: histidine 80, histidine 82, histidine 130, and histidine 132. Residues asparagine 228, asparagine 283, asparagine 396, and asparagine 478 are each glycosylated (N-linked (GlcNAc...) asparagine). One can recognise a Plastocyanin-like 3 domain in the interval 469–588 (DEGLVIRTKN…AGGMAIAILD (120 aa)). Histidine 503 is a Cu cation binding site. Asparagine 520 carries N-linked (GlcNAc...) asparagine glycosylation. Positions 629–651 (PLLAVSPSGGPKKDSGETSASDS) are disordered.

Belongs to the multicopper oxidase family. As to quaternary structure, might be part of an extracellular enzyme complex composed of GIP1, aurF, aurO and aurS.

The protein resides in the secreted. It localises to the extracellular space. Its pathway is pigment biosynthesis. In terms of biological role, multicopper oxidase; part of the gene cluster that mediates the biosynthesis of aurofusarin, a red mycelium pigment which is acting as a mycotoxin. The first step is performed by the polyketide synthase which condenses one acetyl-CoA and 6 malonyl-CoA units to form the first intermediate, the cyclic heptaketide and yellow pigment YWA1. The C2 hydroxyl group in the pyrone ring of YWA1 is probably formed during ring closure by an aldol-type cyclization reaction. The dehydratase aurZ then acts as the first tailoring enzyme in the aurofusarin biosynthetic pathway by converting YWA1 to nor-rubrofusarin. Nor-rubrofusarin is then methylated to rubrofusarin by the O-methyltransferase aurJ. Rubrofusarin is then transported across the plasma membrane by the rubrofusarin-specific pump aurT for further enzymatic processing by the extracellular complex composed of GIP1, aurF, aurO and aurS to yield aurofusarin. In Gibberella zeae (strain ATCC MYA-4620 / CBS 123657 / FGSC 9075 / NRRL 31084 / PH-1) (Wheat head blight fungus), this protein is Multicopper oxidase GIP1.